A 278-amino-acid chain; its full sequence is Undecaprenyl-diphosphatase 1 (278 aa).

The next 5 helical transmembrane spans lie at 85 to 105 (LNVIIATIPAIVLGLLFEKTI), 108 to 128 (ALFSPVPVAFALVAGGVVILW), 188 to 208 (VATEFSFFLAIPIIFGATAYE), 218 to 238 (VDALGTFALGFVAAFVSAFAC), and 254 to 274 (FAWYRIGFGLLILLVGYSGAL).

It belongs to the UppP family.

It localises to the cell inner membrane. The catalysed reaction is di-trans,octa-cis-undecaprenyl diphosphate + H2O = di-trans,octa-cis-undecaprenyl phosphate + phosphate + H(+). Its function is as follows. Catalyzes the dephosphorylation of undecaprenyl diphosphate (UPP). Confers resistance to bacitracin. In Paraburkholderia xenovorans (strain LB400), this protein is Undecaprenyl-diphosphatase 1.